A 149-amino-acid chain; its full sequence is Heat shock protein beta-3 (149 aa).

Residues 47–149 (KARAAQAPPV…VEVKDSAGTK (103 aa)) form the sHSP domain.

It belongs to the small heat shock protein (HSP20) family.

The protein resides in the cytoplasm. The protein localises to the nucleus. Inhibitor of actin polymerization. This is Heat shock protein beta-3 (HSPB3) from Bos taurus (Bovine).